Consider the following 233-residue polypeptide: Zinc import ATP-binding protein ZnuC (233 aa).

In terms of domain architecture, ABC transporter spans 6 to 222; that stretch reads IEFRNVSKKF…SEFSNALSAL (217 aa). 38–45 contacts ATP; that stretch reads GPNGAGKT.

Belongs to the ABC transporter superfamily. Zinc importer (TC 3.A.1.15.5) family. The complex is composed of two ATP-binding proteins (ZnuC), two transmembrane proteins (ZnuB) and a solute-binding protein (ZnuA).

The protein localises to the cell inner membrane. The catalysed reaction is Zn(2+)(out) + ATP(in) + H2O(in) = Zn(2+)(in) + ADP(in) + phosphate(in) + H(+)(in). Its function is as follows. Part of the ABC transporter complex ZnuABC involved in zinc import. Responsible for energy coupling to the transport system. The sequence is that of Zinc import ATP-binding protein ZnuC from Rickettsia conorii (strain ATCC VR-613 / Malish 7).